A 446-amino-acid chain; its full sequence is Phosphoglucosamine mutase (446 aa).

Ser-104 acts as the Phosphoserine intermediate in catalysis. Mg(2+)-binding residues include Ser-104, Asp-241, Asp-243, and Asp-245. The residue at position 104 (Ser-104) is a Phosphoserine.

It belongs to the phosphohexose mutase family. The cofactor is Mg(2+). Activated by phosphorylation.

The catalysed reaction is alpha-D-glucosamine 1-phosphate = D-glucosamine 6-phosphate. Catalyzes the conversion of glucosamine-6-phosphate to glucosamine-1-phosphate. The sequence is that of Phosphoglucosamine mutase from Teredinibacter turnerae (strain ATCC 39867 / T7901).